A 1298-amino-acid chain; its full sequence is Phosphoribosylformylglycinamidine synthase (1298 aa).

The tract at residues 303 to 327 is disordered; sequence FPGAATGSGGEIRDEGATGRGAKPK. Residues 305 to 316, 384 to 386, and alanine 676 contribute to the ATP site; these read GAATGSGGEIRD and TGY. Residues aspartate 677, glutamate 716, asparagine 720, and aspartate 884 each contribute to the Mg(2+) site. Serine 886 is an ATP binding site. The region spanning 1045–1298 is the Glutamine amidotransferase type-1 domain; it reads VAVLREQGVN…MFRNARAWVN (254 aa). The active-site Nucleophile is cysteine 1138. Active-site residues include histidine 1263 and glutamate 1265.

It in the N-terminal section; belongs to the FGAMS family. Monomer.

It localises to the cytoplasm. The enzyme catalyses N(2)-formyl-N(1)-(5-phospho-beta-D-ribosyl)glycinamide + L-glutamine + ATP + H2O = 2-formamido-N(1)-(5-O-phospho-beta-D-ribosyl)acetamidine + L-glutamate + ADP + phosphate + H(+). The protein operates within purine metabolism; IMP biosynthesis via de novo pathway; 5-amino-1-(5-phospho-D-ribosyl)imidazole from N(2)-formyl-N(1)-(5-phospho-D-ribosyl)glycinamide: step 1/2. Phosphoribosylformylglycinamidine synthase involved in the purines biosynthetic pathway. Catalyzes the ATP-dependent conversion of formylglycinamide ribonucleotide (FGAR) and glutamine to yield formylglycinamidine ribonucleotide (FGAM) and glutamate. The sequence is that of Phosphoribosylformylglycinamidine synthase from Pseudomonas syringae pv. syringae (strain B728a).